A 543-amino-acid chain; its full sequence is Ribonuclease Y (543 aa).

Residues 4 to 24 (IIMIPVATAIVSLLVGTVTGY) form a helical membrane-spanning segment. The region spanning 233 to 296 (TVSVVDLPNE…EIAKRAMERL (64 aa)) is the KH domain. Residues 359 to 452 (VLSHSIEVGK…VVAADTISSA (94 aa)) enclose the HD domain.

This sequence belongs to the RNase Y family.

It is found in the cell membrane. Its function is as follows. Endoribonuclease that initiates mRNA decay. This is Ribonuclease Y from Lactobacillus acidophilus (strain ATCC 700396 / NCK56 / N2 / NCFM).